The following is a 675-amino-acid chain: Electrogenic aspartate/glutamate antiporter SLC25A13, mitochondrial (675 aa).

Ala2 is modified (N-acetylalanine). The regulatory N-terminal domain stretch occupies residues 2 to 295 (AAAKVALTKR…TLADIERIAP (294 aa)). The Mitochondrial intermembrane segment spans residues 2–331 (AAAKVALTKR…LLQVAESAYR (330 aa)). EF-hand domains are found at residues 51–86 (SQPN…SVLC), 87–122 (APDA…TTIH), 125–157 (IPFN…FLLE), and 158–193 (IQLE…IRPH). Residues Asp66, Thr68, Asp70, Leu72, and Glu77 each coordinate Ca(2+). Residues 296 to 311 (LEEGTLPFNLAEAQRQ) are linker loop domain. Positions 321–612 (VLLQVAESAY…LQRWFYIDFG (292 aa)) are carrier domain. Solcar repeat units follow at residues 326 to 418 (AESA…VRDK), 426 to 510 (VPLA…VKAS), and 518 to 606 (VSPG…LQRW). The helical transmembrane segment at 332 to 349 (FGLGSVAGAVGATAVYPI) threads the bilayer. The Mitochondrial matrix segment spans residues 350 to 392 (DLVKTRMQNQRSTGSFVGELMYKNSFDCFKKVLRYEGFFGLYR). Lys353 and Lys372 each carry N6-acetyllysine. A helical transmembrane segment spans residues 393–412 (GLLPQLLGVAPEKAIKLTVN). Residues 413-435 (DFVRDKFMHKDGSVPLAAEILAG) are Mitochondrial intermembrane-facing. The helical transmembrane segment at 436–449 (GCAGGSQVIFTNPL) threads the bilayer. Topologically, residues 450–484 (EIVKIRLQVAGEITTGPRVSALSVVRDLGFFGIYK) are mitochondrial matrix. At Lys453 the chain carries N6-methyllysine. An N6-acetyllysine; alternate modification is found at Lys484. An N6-succinyllysine; alternate modification is found at Lys484. Residues 485-504 (GAKACFLRDIPFSAIYFPCY) traverse the membrane as a helical segment. At 505–523 (AHVKASFANEDGQVSPGSL) the chain is on the mitochondrial intermembrane side. A helical membrane pass occupies residues 524–541 (LLAGAIAGMPAASLVTPA). The Mitochondrial matrix segment spans residues 542 to 580 (DVIKTRLQVAARAGQTTYSGVIDCFRKILREEGPKALWK). Lys580 carries the N6-succinyllysine modification. The helical transmembrane segment at 581 to 600 (GAGARVFRSSPQFGVTLLTY) threads the bilayer. At 601-675 (ELLQRWFYID…STSKAIGGGP (75 aa)) the chain is on the mitochondrial intermembrane side. The tract at residues 613–675 (GVKPMGSEPV…STSKAIGGGP (63 aa)) is C-terminal domain. Lys662 carries the N6-acetyllysine modification. At Ser666 the chain carries Phosphoserine.

Belongs to the mitochondrial carrier (TC 2.A.29) family. Homodimer (via N-terminus). High levels in liver and low levels in kidney, pancreas, placenta, heart and brain.

The protein resides in the mitochondrion inner membrane. The enzyme catalyses L-aspartate(in) + L-glutamate(out) + H(+)(out) = L-aspartate(out) + L-glutamate(in) + H(+)(in). It carries out the reaction 3-sulfino-L-alanine(out) + L-glutamate(in) + H(+)(in) = 3-sulfino-L-alanine(in) + L-glutamate(out) + H(+)(out). It catalyses the reaction 3-sulfino-L-alanine(out) + L-aspartate(in) = 3-sulfino-L-alanine(in) + L-aspartate(out). Activated by calcium-binding in the mitochondrial intermembrane space. Inhibited by pyridoxal 5'-phosphate, bathophenathroline, mercurials, diethyl pyrocarbonate and N-ethylmaleimide. In terms of biological role, mitochondrial electrogenic aspartate/glutamate antiporter that favors efflux of aspartate and entry of glutamate and proton within the mitochondria as part of the malate-aspartate shuttle. Also mediates the uptake of L-cysteinesulfinate (3-sulfino-L-alanine) by mitochondria in exchange of L-glutamate and proton. Can also exchange L-cysteinesulfinate with aspartate in their anionic form without any proton translocation. Lacks transport activity towards gamma-aminobutyric acid (GABA). The chain is Electrogenic aspartate/glutamate antiporter SLC25A13, mitochondrial from Homo sapiens (Human).